A 696-amino-acid polypeptide reads, in one-letter code: Elongation factor G (696 aa).

In terms of domain architecture, tr-type G spans 8–288 (EDYRNFGIMA…AVVEYLPSPA (281 aa)). Residues 17–24 (AHIDAGKT), 86–90 (DTPGH), and 140–143 (NKMD) each bind GTP.

This sequence belongs to the TRAFAC class translation factor GTPase superfamily. Classic translation factor GTPase family. EF-G/EF-2 subfamily.

The protein resides in the cytoplasm. Catalyzes the GTP-dependent ribosomal translocation step during translation elongation. During this step, the ribosome changes from the pre-translocational (PRE) to the post-translocational (POST) state as the newly formed A-site-bound peptidyl-tRNA and P-site-bound deacylated tRNA move to the P and E sites, respectively. Catalyzes the coordinated movement of the two tRNA molecules, the mRNA and conformational changes in the ribosome. This is Elongation factor G from Mesorhizobium japonicum (strain LMG 29417 / CECT 9101 / MAFF 303099) (Mesorhizobium loti (strain MAFF 303099)).